The chain runs to 341 residues: L-threonine 3-dehydrogenase (341 aa).

Cysteine 38 contacts Zn(2+). Active-site charge relay system residues include threonine 40 and histidine 43. The Zn(2+) site is built by histidine 63, glutamate 64, cysteine 93, cysteine 96, cysteine 99, and cysteine 107. NAD(+)-binding positions include isoleucine 175, aspartate 195, arginine 200, 262-264 (LGI), and 286-287 (IY).

Belongs to the zinc-containing alcohol dehydrogenase family. Homotetramer. The cofactor is Zn(2+).

It localises to the cytoplasm. It catalyses the reaction L-threonine + NAD(+) = (2S)-2-amino-3-oxobutanoate + NADH + H(+). It functions in the pathway amino-acid degradation; L-threonine degradation via oxydo-reductase pathway; glycine from L-threonine: step 1/2. Catalyzes the NAD(+)-dependent oxidation of L-threonine to 2-amino-3-ketobutyrate. In Cronobacter sakazakii (strain ATCC BAA-894) (Enterobacter sakazakii), this protein is L-threonine 3-dehydrogenase.